The chain runs to 148 residues: Transcriptional regulator MraZ (148 aa).

SpoVT-AbrB domains lie at 5 to 53 and 82 to 125; these read ETAI…VEKE and SALL…SEQA.

This sequence belongs to the MraZ family. As to quaternary structure, forms oligomers.

The protein localises to the cytoplasm. It is found in the nucleoid. The protein is Transcriptional regulator MraZ of Xylella fastidiosa (strain Temecula1 / ATCC 700964).